The chain runs to 484 residues: MTLSQWQPSRKSDVPLHRQIEQYMKDKILHGEWAVGTKIPSQRTLADMFQVNRSTVTAAIDELTSQGLLEGRKGGGTKVVNSTWSVLTAEPPLDWSDYVRSGIHRANSSIIQAINQNEPRADIIRLGTGELSPDLVPADTIGRMFQQINPGVLSLGYEQPKGNRQLREAVADHLKGKKIHVSPSAILIVSGALQALQLISIGLLKRDSVILTEKPSYLQSLHVFQSAGMRLRGLPMDDEGVKAGLVSSNRKQYGGQLLYTIPSFHNPTGTVMSEQRRKEIISLSKKEQMPIIEDDAYGDLWFEEKPPQPLKAMDHEGNILYLGAFSKTVSPGLRIGWLAGPEPVIERLADIKMQTDYGSSGLSQWAAAEWLSQGYYEEHLTWVRRKLKERRDAAVHFLERYAGDIATWRIPAGGFYIWVTFHKNLPVSRFFYELLKRQVLVNPGYIYDGEDRNSIRLSYSYASLGDLETGIKAAAETARRLMMS.

The HTH gntR-type domain maps to 14–82; sequence VPLHRQIEQY…KGGGTKVVNS (69 aa). Positions 42–61 form a DNA-binding region, H-T-H motif; it reads QRTLADMFQVNRSTVTAAID. Lysine 327 bears the N6-(pyridoxal phosphate)lysine mark.

The protein in the C-terminal section; belongs to the class-I pyridoxal-phosphate-dependent aminotransferase family. The cofactor is pyridoxal 5'-phosphate.

This is an uncharacterized protein from Bacillus subtilis (strain 168).